A 119-amino-acid polypeptide reads, in one-letter code: Na(+)/H(+) antiporter subunit G (119 aa).

Transmembrane regions (helical) follow at residues 7 to 29, 44 to 61, and 66 to 88; these read IISIFVLIGGFLSLLGSIGIIRF, TLGVISIMLATFLFFFLV, and VGKLLLTILFVFLTAPVAGMMMG.

It belongs to the CPA3 antiporters (TC 2.A.63) subunit G family. Forms a heterooligomeric complex that consists of seven subunits: MrpA, MrpB, MrpC, MrpD, MrpE, MrpF and MrpG.

Its subcellular location is the cell membrane. Its function is as follows. Mnh complex is a Na(+)Li(+)/H(+) antiporter involved in Na(+) and/or Li(+) excretion and Na(+) resistance. Na(+)/H(+) antiport consumes a transmembrane electrical potential, and is thus inferred to be electrogenic. Does not transport K(+), Ca(2+) or Mg(2+). In Alkalihalophilus pseudofirmus (strain ATCC BAA-2126 / JCM 17055 / OF4) (Bacillus pseudofirmus), this protein is Na(+)/H(+) antiporter subunit G (mrpG).